A 198-amino-acid polypeptide reads, in one-letter code: Basic helix-loop-helix transcription factor amos (198 aa).

The tract at residues 76 to 131 (EQQQHHLQANPLGKNQGRSPRYWNKQQRSKPYDKLSTSMSSSTSSASSSSSSSAGF) is disordered. The span at 111–129 (STSMSSSTSSASSSSSSSA) shows a compositional bias: low complexity. The bHLH domain maps to 138–190 (KRRLAANARERRRMNSLNDAFDKLRDVVPSLGHDRRLSKYETLQMAQAYIGDL).

As to quaternary structure, efficient DNA binding requires dimerization with another bHLH protein. Interacts with Daughterless (da). In terms of tissue distribution, during embryonic development, expression is seen in a small cluster of ectodermal cells during stage 10 which becomes restricted to 1 cell by stage 11. Expression is lost from this cell in the thorax and then the abdomen. Later expression is restricted to sensory organ precursors. Very transient expression was detected in distal leg disks at approximately 0-4 hours after puparium formation (APF), correlating with the anlage of the innervated tarsal claw.

It localises to the nucleus. Its function is as follows. Transcription factor involved in early neurogenesis; sensillum basiconica formation and maybe sensillum trichodea development. Promotes multiple dendritic (MD) neuron formation. Required for olfactory sensilla; regulated by lozenge (lz). The polypeptide is Basic helix-loop-helix transcription factor amos (amos) (Drosophila melanogaster (Fruit fly)).